The sequence spans 244 residues: Phosphoadenosine 5'-phosphosulfate reductase (244 aa).

Residue Cys-239 is the Nucleophile; cysteine thiosulfonate intermediate of the active site.

The protein belongs to the PAPS reductase family. CysH subfamily.

The protein resides in the cytoplasm. The enzyme catalyses [thioredoxin]-disulfide + sulfite + adenosine 3',5'-bisphosphate + 2 H(+) = [thioredoxin]-dithiol + 3'-phosphoadenylyl sulfate. The protein operates within sulfur metabolism; hydrogen sulfide biosynthesis; sulfite from sulfate: step 3/3. In terms of biological role, catalyzes the formation of sulfite from phosphoadenosine 5'-phosphosulfate (PAPS) using thioredoxin as an electron donor. In Salmonella arizonae (strain ATCC BAA-731 / CDC346-86 / RSK2980), this protein is Phosphoadenosine 5'-phosphosulfate reductase.